A 341-amino-acid chain; its full sequence is Phosphoribosylformylglycinamidine cyclo-ligase (341 aa).

It belongs to the AIR synthase family.

Its subcellular location is the cytoplasm. The enzyme catalyses 2-formamido-N(1)-(5-O-phospho-beta-D-ribosyl)acetamidine + ATP = 5-amino-1-(5-phospho-beta-D-ribosyl)imidazole + ADP + phosphate + H(+). It participates in purine metabolism; IMP biosynthesis via de novo pathway; 5-amino-1-(5-phospho-D-ribosyl)imidazole from N(2)-formyl-N(1)-(5-phospho-D-ribosyl)glycinamide: step 2/2. This is Phosphoribosylformylglycinamidine cyclo-ligase from Synechocystis sp. (strain ATCC 27184 / PCC 6803 / Kazusa).